The sequence spans 124 residues: Small ribosomal subunit protein eS8 (124 aa).

The span at 1–22 shows a compositional bias: basic residues; the sequence is MQYQGRSKRSKTGARLRPRSKK. Disordered regions lie at residues 1–40 and 102–124; these read MQYQGRSKRSKTGARLRPRSKKSKSELGREPTETTVGEPR and AGTARVTSRPGQDGQVNATRVDE. Positions 23–32 are enriched in basic and acidic residues; sequence SKSELGREPT. Polar residues predominate over residues 106–124; sequence RVTSRPGQDGQVNATRVDE.

This sequence belongs to the eukaryotic ribosomal protein eS8 family. As to quaternary structure, part of the 30S ribosomal subunit.

The polypeptide is Small ribosomal subunit protein eS8 (Halobacterium salinarum (strain ATCC 29341 / DSM 671 / R1)).